The chain runs to 329 residues: tRNA-modifying protein YgfZ (329 aa).

2 residues coordinate folate: Trp28 and Trp188.

Belongs to the tRNA-modifying YgfZ family.

It is found in the cytoplasm. In terms of biological role, folate-binding protein involved in regulating the level of ATP-DnaA and in the modification of some tRNAs. It is probably a key factor in regulatory networks that act via tRNA modification, such as initiation of chromosomal replication. This Photorhabdus laumondii subsp. laumondii (strain DSM 15139 / CIP 105565 / TT01) (Photorhabdus luminescens subsp. laumondii) protein is tRNA-modifying protein YgfZ.